Here is a 270-residue protein sequence, read N- to C-terminus: Protein-ADP-ribose hydrolase (270 aa).

In terms of domain architecture, Macro spans 73–267; it reads VSVKDCQKTN…LYDTYLQKEN (195 aa). The ADP-D-ribose site is built by Asp-92, Ile-93, and Asn-106. The Zn(2+) site is built by Cys-112, His-117, and Cys-119. Residues Cys-119, Ile-120, Asp-121, Ser-212, Thr-213, Gly-214, Glu-215, and Phe-216 each coordinate ADP-D-ribose.

The protein belongs to the MacroD-type family. Zn-Macro subfamily. Zn(2+) is required as a cofactor.

It carries out the reaction 4-O-(ADP-D-ribosyl)-L-aspartyl-[protein] + H2O = L-aspartyl-[protein] + ADP-D-ribose + H(+). Functionally, ADP-ribosylhydrolase that specifically reverses the SirTM-mediated mono-ADP-ribosylation at an asparatate residue of GcvH-L, by releasing ADP-ribose from the target protein. May play a role in the regulation of the response to host-induced oxidative stress. This chain is Protein-ADP-ribose hydrolase, found in Streptococcus pyogenes serotype M6 (strain ATCC BAA-946 / MGAS10394).